A 260-amino-acid chain; its full sequence is Trans-aconitate 2-methyltransferase (260 aa).

It belongs to the methyltransferase superfamily. Tam family.

The protein localises to the cytoplasm. It catalyses the reaction trans-aconitate + S-adenosyl-L-methionine = (E)-3-(methoxycarbonyl)pent-2-enedioate + S-adenosyl-L-homocysteine. Catalyzes the S-adenosylmethionine monomethyl esterification of trans-aconitate. This Methylobacterium radiotolerans (strain ATCC 27329 / DSM 1819 / JCM 2831 / NBRC 15690 / NCIMB 10815 / 0-1) protein is Trans-aconitate 2-methyltransferase.